Reading from the N-terminus, the 477-residue chain is Proton-coupled amino acid transporter 3 (477 aa).

Residues 1-54 lie on the Cytoplasmic side of the membrane; sequence MGNVPLLREVGKCQRNMFGRSTASSKGSSNSRSSSSTSPKKGPRREADALMFIQ. The segment covering 19–40 has biased composition (low complexity); sequence GRSTASSKGSSNSRSSSSTSPK. The tract at residues 19–43 is disordered; the sequence is GRSTASSKGSSNSRSSSSTSPKKGP. Residues 55–75 form a helical membrane-spanning segment; that stretch reads IFIHLLKSNIGTGFLGLPLAV. Over 76-77 the chain is Extracellular; the sequence is KN. Residues 78 to 98 traverse the membrane as a helical segment; it reads AGLLVGPVSLLAIGALTVHCM. Residues 99–144 lie on the Cytoplasmic side of the membrane; that stretch reads DILLNCACHLTQRLQRSFVNYEETTMYSLETCPSPWLRTHSVWGRY. The helical transmembrane segment at 145–165 threads the bilayer; sequence VVSFLLIVTQLGFCSVYFMFL. The Extracellular portion of the chain corresponds to 166–202; sequence ADNLQQIMEEAHFTSNVCQPRQSLVMTSILDTRFYML. Residues 203-223 form a helical membrane-spanning segment; that stretch reads TILPFLILLVLIQNPQVLSIF. The Cytoplasmic portion of the chain corresponds to 224–225; the sequence is ST. A helical transmembrane segment spans residues 226–246; it reads LATITTLSSLALIFEYLIQTP. Residues 247 to 259 are Extracellular-facing; that stretch reads HHSNLPLVANWKT. The chain crosses the membrane as a helical span at residues 260-280; sequence FLLFFGTAIFTFEGVGMVLPL. At 281–291 the chain is on the cytoplasmic side; the sequence is KSQMKSPQQFP. A helical transmembrane segment spans residues 292–312; that stretch reads AVLYLGMSFVIFLYICLGTLG. Over 313-344 the chain is Extracellular; sequence YMKFGTDTQASITLNLPICWLYQSVKLMYSVG. Residues 345–365 form a helical membrane-spanning segment; sequence IFFTYALQFHVPAEIIVPYVV. The Cytoplasmic segment spans residues 366–374; the sequence is SRVSENWAL. A helical membrane pass occupies residues 375–395; sequence FVDLTVRTALVCLTCFSAVLI. Residues 396-399 are Extracellular-facing; that stretch reads PRLD. The helical transmembrane segment at 400 to 420 threads the bilayer; the sequence is LVISLVGSVSSSALAIIIPPL. Residues 421-432 are Cytoplasmic-facing; that stretch reads LEIATFYSENIS. The helical transmembrane segment at 433-453 threads the bilayer; that stretch reads CATIVKDIMISILGLLGCVLG. The Extracellular segment spans residues 454–477; the sequence is TYQALYEMTQQTHFYMANSTRVHI.

This sequence belongs to the amino acid/polyamine transporter 2 family. Specifically expressed in testis.

The protein resides in the membrane. This is Proton-coupled amino acid transporter 3 (Slc36a3) from Mus musculus (Mouse).